The sequence spans 474 residues: Trigger factor (474 aa).

Positions 171–258 constitute a PPIase FKBP-type domain; it reads GDVAVIDFQG…LKELKTRDLP (88 aa). The disordered stretch occupies residues 441-474; that stretch reads TEVDAASATVETTATETAEEAPEAPKAKKGKKKA. The segment covering 444-456 has biased composition (low complexity); sequence DAASATVETTATE.

Belongs to the FKBP-type PPIase family. Tig subfamily.

The protein resides in the cytoplasm. The enzyme catalyses [protein]-peptidylproline (omega=180) = [protein]-peptidylproline (omega=0). Involved in protein export. Acts as a chaperone by maintaining the newly synthesized protein in an open conformation. Functions as a peptidyl-prolyl cis-trans isomerase. The polypeptide is Trigger factor (Synechococcus sp. (strain ATCC 27144 / PCC 6301 / SAUG 1402/1) (Anacystis nidulans)).